The chain runs to 308 residues: Mitochondrial import receptor subunit TOM40B (308 aa).

The interval 1-29 is disordered; the sequence is MGNTLGLAPMGTLPRRSHRREEPLPNPGS. The required for mitochondrial targeting stretch occupies residues 281 to 308; sequence PLPVTLALGAFLNHWRNRFHCGFSITVG.

It belongs to the Tom40 family. As to quaternary structure, forms part of the preprotein translocase of the outer mitochondrial membrane (TOM complex) containing TOMM22, TOMM40, TOMM40L and TOMM70. Interacts with mitochondrial targeting sequences.

The protein resides in the mitochondrion outer membrane. Functionally, potential channel-forming protein implicated in import of protein precursors into mitochondria. The chain is Mitochondrial import receptor subunit TOM40B (Tomm40l) from Mus musculus (Mouse).